The following is a 172-amino-acid chain: Shikimate kinase (172 aa).

14–19 is an ATP binding site; it reads GAGKST. Ser18 contributes to the Mg(2+) binding site. Substrate is bound by residues Asp36, Arg60, and Gly82. An ATP-binding site is contributed by Arg120. Residue Arg140 coordinates substrate. Gln157 contacts ATP.

Belongs to the shikimate kinase family. In terms of assembly, monomer. Requires Mg(2+) as cofactor.

It is found in the cytoplasm. It catalyses the reaction shikimate + ATP = 3-phosphoshikimate + ADP + H(+). It participates in metabolic intermediate biosynthesis; chorismate biosynthesis; chorismate from D-erythrose 4-phosphate and phosphoenolpyruvate: step 5/7. Catalyzes the specific phosphorylation of the 3-hydroxyl group of shikimic acid using ATP as a cosubstrate. This chain is Shikimate kinase, found in Aeromonas salmonicida (strain A449).